Consider the following 361-residue polypeptide: DNA replication and repair protein RecF (361 aa).

30-37 lines the ATP pocket; sequence GPNGSGKT.

The protein belongs to the RecF family.

Its subcellular location is the cytoplasm. Its function is as follows. The RecF protein is involved in DNA metabolism; it is required for DNA replication and normal SOS inducibility. RecF binds preferentially to single-stranded, linear DNA. It also seems to bind ATP. This is DNA replication and repair protein RecF from Yersinia enterocolitica serotype O:8 / biotype 1B (strain NCTC 13174 / 8081).